Here is a 220-residue protein sequence, read N- to C-terminus: Metalloproteinase inhibitor 2 (220 aa).

The signal sequence occupies residues 1-26 (MGAAARSLPLAFCLLLLGTLLPRADA). Cysteine 27 serves as a coordination point for Zn(2+). Residues 27–30 (CSCS) are involved in metalloproteinase-binding. Cystine bridges form between cysteine 27/cysteine 98, cysteine 29/cysteine 127, cysteine 39/cysteine 152, cysteine 154/cysteine 201, cysteine 159/cysteine 164, and cysteine 172/cysteine 193. Positions 27 to 152 (CSCSPVHPQQ…SLNHRYQMGC (126 aa)) constitute an NTR domain.

It belongs to the protease inhibitor I35 (TIMP) family. As to quaternary structure, interacts (via the C-terminal) with MMP2 (via the C-terminal PEX domain); the interaction inhibits the MMP2 activity. Post-translationally, the activity of TIMP2 is dependent on the presence of disulfide bonds.

It is found in the secreted. Complexes with metalloproteinases (such as collagenases) and irreversibly inactivates them by binding to their catalytic zinc cofactor. The polypeptide is Metalloproteinase inhibitor 2 (TIMP2) (Bos taurus (Bovine)).